Consider the following 440-residue polypeptide: Ribosomal protein uS12 methylthiotransferase RimO (440 aa).

In terms of domain architecture, MTTase N-terminal spans 6-116; the sequence is PKVGFVSLGC…VVTAVHEVVP (111 aa). [4Fe-4S] cluster contacts are provided by Cys15, Cys51, Cys80, Cys149, Cys153, and Cys156. Positions 135-373 constitute a Radical SAM core domain; the sequence is LTPRHYAYLK…MAHQQAISAA (239 aa). One can recognise a TRAM domain in the interval 376-440; it reads QLKVGKEIEV…DEYDLWAELV (65 aa).

Belongs to the methylthiotransferase family. RimO subfamily. The cofactor is [4Fe-4S] cluster.

Its subcellular location is the cytoplasm. The catalysed reaction is L-aspartate(89)-[ribosomal protein uS12]-hydrogen + (sulfur carrier)-SH + AH2 + 2 S-adenosyl-L-methionine = 3-methylsulfanyl-L-aspartate(89)-[ribosomal protein uS12]-hydrogen + (sulfur carrier)-H + 5'-deoxyadenosine + L-methionine + A + S-adenosyl-L-homocysteine + 2 H(+). In terms of biological role, catalyzes the methylthiolation of an aspartic acid residue of ribosomal protein uS12. The chain is Ribosomal protein uS12 methylthiotransferase RimO from Pseudomonas aeruginosa (strain UCBPP-PA14).